Consider the following 332-residue polypeptide: 30 kDa heat shock protein (332 aa).

The Extracellular segment spans residues methionine 1–tryptophan 34. The helical transmembrane segment at leucine 35–isoleucine 55 threads the bilayer. Residues alanine 56 to arginine 65 are Cytoplasmic-facing. Residues tyrosine 66–alanine 86 form a helical membrane-spanning segment. Over serine 87–lysine 121 the chain is Extracellular. Residues tyrosine 122–threonine 142 traverse the membrane as a helical segment. At threonine 143–serine 157 the chain is on the cytoplasmic side. The helical transmembrane segment at leucine 158–isoleucine 178 threads the bilayer. The Extracellular segment spans residues lysine 179–threonine 181. The helical transmembrane segment at tyrosine 182–cysteine 202 threads the bilayer. Residues glutamine 203–asparagine 215 are Cytoplasmic-facing. The chain crosses the membrane as a helical span at residues alanine 216–serine 236. The Extracellular portion of the chain corresponds to aspartate 237 to alanine 248. A helical membrane pass occupies residues isoleucine 249–alanine 269. Residues valine 270–alanine 332 lie on the Cytoplasmic side of the membrane. The tract at residues alanine 290–alanine 332 is disordered. Serine 308 is modified (phosphoserine). The segment covering proline 322–alanine 332 has biased composition (acidic residues). The residue at position 331 (threonine 331) is a Phosphothreonine.

The protein belongs to the archaeal/bacterial/fungal opsin family.

It localises to the membrane. Its function is as follows. Probably cooperates with other heat shock proteins in the translocation of polypeptides through membranes. It may counteract the altering effect of heat shock on the plasma membrane. The polypeptide is 30 kDa heat shock protein (HSP30) (Saccharomyces cerevisiae (strain ATCC 204508 / S288c) (Baker's yeast)).